The chain runs to 117 residues: Colipase (117 aa).

The N-terminal stretch at 1 to 22 (MNIFNILLPIVVLLLVFGLTAA) is a signal peptide. 5 cysteine pairs are disulfide-bonded: Cys-39-Cys-50, Cys-45-Cys-61, Cys-49-Cys-83, Cys-71-Cys-91, and Cys-85-Cys-109.

It belongs to the colipase family. As to quaternary structure, forms a 1:1 stoichiometric complex with pancreatic lipase.

The protein resides in the secreted. In terms of biological role, colipase is a cofactor of pancreatic lipase. It allows the lipase to anchor itself to the lipid-water interface. Without colipase the enzyme is washed off by bile salts, which have an inhibitory effect on the lipase. The sequence is that of Colipase (clps) from Xenopus tropicalis (Western clawed frog).